A 730-amino-acid chain; its full sequence is Probable palmitoyltransferase AKR2 (730 aa).

ANK repeat units follow at residues 32–62 (FVVE…DINK), 66–95 (DELP…NVNQ), 100–129 (ERAT…NPTL), 133–166 (QGLN…NVDI), 172–201 (NNRT…TVAL), and 205–234 (RGFN…NFYE). 4 helical membrane passes run 283 to 303 (LMIF…SLIL), 309 to 328 (IALS…KFVL), 344 to 364 (TPFF…IWVK), and 376 to 396 (AKDA…LKLV). Residues 429–479 (NFCVETLERKPLRSKYSLFSGALVARFNHYCPWVYNDIGLKNHKLFMFFAF) enclose the DHHC domain. Cys-459 functions as the S-palmitoyl cysteine intermediate in the catalytic mechanism. A run of 2 helical transmembrane segments spans residues 473–493 (LFMF…WLCL) and 530–550 (TFFL…MLIV).

It belongs to the DHHC palmitoyltransferase family. AKR/ZDHHC17 subfamily.

Its subcellular location is the membrane. It catalyses the reaction L-cysteinyl-[protein] + hexadecanoyl-CoA = S-hexadecanoyl-L-cysteinyl-[protein] + CoA. The sequence is that of Probable palmitoyltransferase AKR2 (AKR2) from Saccharomyces uvarum (strain ATCC 76518 / CBS 7001 / CLIB 283 / NBRC 10550 / MCYC 623 / NCYC 2669 / NRRL Y-11845) (Yeast).